A 466-amino-acid chain; its full sequence is 3-isopropylmalate dehydratase large subunit (466 aa).

Residues cysteine 347, cysteine 407, and cysteine 410 each contribute to the [4Fe-4S] cluster site.

Belongs to the aconitase/IPM isomerase family. LeuC type 1 subfamily. As to quaternary structure, heterodimer of LeuC and LeuD. The cofactor is [4Fe-4S] cluster.

It carries out the reaction (2R,3S)-3-isopropylmalate = (2S)-2-isopropylmalate. The protein operates within amino-acid biosynthesis; L-leucine biosynthesis; L-leucine from 3-methyl-2-oxobutanoate: step 2/4. In terms of biological role, catalyzes the isomerization between 2-isopropylmalate and 3-isopropylmalate, via the formation of 2-isopropylmaleate. This is 3-isopropylmalate dehydratase large subunit from Shigella sonnei (strain Ss046).